Reading from the N-terminus, the 202-residue chain is Phosphatidyl-N-methylethanolamine N-methyltransferase (202 aa).

The Lumenal portion of the chain corresponds to 1 to 12; the sequence is MTTLSDYVDFSQ. The segment at residues 13–33 is an intramembrane region (helical); it reads DSFKYAALSIAFNPIFWNVVA. The Lumenal portion of the chain corresponds to 34–45; sequence RAEYRSHFLTRI. The chain crosses the membrane as a helical span at residues 46 to 66; it reads FGSPYRGCYFLAITIFSLGIL. Over 67-90 the chain is Cytoplasmic; sequence RDHIYQQALEDQPYYAPVHQPVLG. Residues 91–111 traverse the membrane as a helical segment; that stretch reads GALFAVGSVLVLSSMYALGVT. 95–97 lines the S-adenosyl-L-methionine pocket; the sequence is AVG. Topologically, residues 112–154 are lumenal; it reads GTYLGDYFGILMDAPVTGFPFNVTGSPMYWGSTLNFLGVALYK. Residues 155-175 traverse the membrane as a helical segment; sequence GKVAGILLTALVFVLYWFALK. Over 176 to 202 the chain is Cytoplasmic; that stretch reads WEDPFTAEIYAKRERERAKSKRGGKNQ. 177–178 contacts S-adenosyl-L-methionine; that stretch reads ED.

This sequence belongs to the class VI-like SAM-binding methyltransferase superfamily. PEMT/PEM2 methyltransferase family.

The protein localises to the endoplasmic reticulum membrane. The protein resides in the mitochondrion membrane. The catalysed reaction is a 1,2-diacyl-sn-glycero-3-phospho-N-methylethanolamine + S-adenosyl-L-methionine = a 1,2-diacyl-sn-glycero-3-phospho-N,N-dimethylethanolamine + S-adenosyl-L-homocysteine + H(+). It catalyses the reaction a 1,2-diacyl-sn-glycero-3-phospho-N,N-dimethylethanolamine + S-adenosyl-L-methionine = a 1,2-diacyl-sn-glycero-3-phosphocholine + S-adenosyl-L-homocysteine + H(+). It participates in phospholipid metabolism; phosphatidylcholine biosynthesis. Its function is as follows. Catalyzes the second two steps of the methylation pathway of phosphatidylcholine biosynthesis, the SAM-dependent methylation of phosphatidylmonomethylethanolamine (PMME) to phosphatidyldimethylethanolamine (PDME) and of PDME to phosphatidylcholine (PC). This chain is Phosphatidyl-N-methylethanolamine N-methyltransferase, found in Emericella nidulans (strain FGSC A4 / ATCC 38163 / CBS 112.46 / NRRL 194 / M139) (Aspergillus nidulans).